A 233-amino-acid chain; its full sequence is Probable septum site-determining protein MinC (233 aa).

Belongs to the MinC family. In terms of assembly, interacts with MinD and FtsZ.

Functionally, cell division inhibitor that blocks the formation of polar Z ring septums. Rapidly oscillates between the poles of the cell to destabilize FtsZ filaments that have formed before they mature into polar Z rings. Prevents FtsZ polymerization. The protein is Probable septum site-determining protein MinC of Proteus mirabilis (strain HI4320).